The sequence spans 319 residues: Putative olfactory receptor 52L2 (319 aa).

Residues 1-43 (MNLDSFFSFLLKSLIMALSNSSWRLPQPSFFLVGIPGLEESQH) lie on the Extracellular side of the membrane. An N-linked (GlcNAc...) asparagine glycan is attached at Asn20. Residues 44–64 (WIALPLGILYLLALVGNVTIL) traverse the membrane as a helical segment. At 65-72 (FIIWMDPS) the chain is on the cytoplasmic side. Residues 73-93 (LHQSMYLFLSMLAAIDLVVAS) form a helical membrane-spanning segment. Over 94–117 (STAPKALAVLLVRAQEIGYTVCLI) the chain is Extracellular. Cys115 and Cys207 are oxidised to a cystine. A helical transmembrane segment spans residues 118 to 138 (QMFFTHAFSSMESGVLVAMAL). Residues 139-157 (DRYVAICHPLHHSTILHPG) are Cytoplasmic-facing. The helical transmembrane segment at 158–178 (VIGHIGMVVLVRGLLLLIPFL) threads the bilayer. Residues 179 to 214 (ILLRKLIFCQATIIGHAYCEHMAVVKLACSETTVNR) lie on the Extracellular side of the membrane. A helical transmembrane segment spans residues 215-235 (AYGLTVALLVVGLDVLAIGVS). Residues 236 to 255 (YAHILQAVLKVPGNEARLKA) lie on the Cytoplasmic side of the membrane. Residues 256-276 (FSTCGSHVCVILVFYIPGMFS) traverse the membrane as a helical segment. Residues 277 to 291 (FLTHRFGHHVPHHVH) lie on the Extracellular side of the membrane. The chain crosses the membrane as a helical span at residues 292–312 (VLLAILYRLVPPALNPLVYRV). Over 313–319 (KTQKIHQ) the chain is Cytoplasmic.

Belongs to the G-protein coupled receptor 1 family.

It localises to the cell membrane. Functionally, odorant receptor. The polypeptide is Putative olfactory receptor 52L2 (OR52L2P) (Homo sapiens (Human)).